The following is a 99-amino-acid chain: MICOS complex subunit MIC10 (99 aa).

Transmembrane regions (helical) follow at residues 27–43 (RFVY…LLFF) and 50–66 (WASI…SAYT).

This sequence belongs to the MICOS complex subunit Mic10 family. In terms of assembly, component of the mitochondrial contact site and cristae organizing system (MICOS) complex. The MICOS complex associates with mitochondrial outer membrane proteins. Present in a large lipid-enriched complex called mitochondrial transmembrane lipoprotein (MTL) complex made of proteins located in the two mitochondrial membranes, including the TOM complex and the core components of the MICOS complex and containing at least digalactosyldiacylglycerol (DGDG).

Its subcellular location is the mitochondrion inner membrane. In terms of biological role, component of the MICOS complex, a large protein complex of the mitochondrial inner membrane that plays crucial roles in the maintenance of crista junctions, inner membrane architecture, and formation of contact sites to the outer membrane. The chain is MICOS complex subunit MIC10 from Arabidopsis thaliana (Mouse-ear cress).